The sequence spans 260 residues: Small ribosomal subunit protein uS2 (260 aa).

It belongs to the universal ribosomal protein uS2 family.

The protein is Small ribosomal subunit protein uS2 of Mesorhizobium japonicum (strain LMG 29417 / CECT 9101 / MAFF 303099) (Mesorhizobium loti (strain MAFF 303099)).